Here is a 325-residue protein sequence, read N- to C-terminus: Acetyl-coenzyme A carboxylase carboxyl transferase subunit alpha (325 aa).

Residues 35 to 292 (EIEKLEARLA…DKVLKRSLKQ (258 aa)) enclose the CoA carboxyltransferase C-terminal domain.

Belongs to the AccA family. Acetyl-CoA carboxylase is a heterohexamer composed of biotin carboxyl carrier protein (AccB), biotin carboxylase (AccC) and two subunits each of ACCase subunit alpha (AccA) and ACCase subunit beta (AccD).

The protein localises to the cytoplasm. It carries out the reaction N(6)-carboxybiotinyl-L-lysyl-[protein] + acetyl-CoA = N(6)-biotinyl-L-lysyl-[protein] + malonyl-CoA. The protein operates within lipid metabolism; malonyl-CoA biosynthesis; malonyl-CoA from acetyl-CoA: step 1/1. Functionally, component of the acetyl coenzyme A carboxylase (ACC) complex. First, biotin carboxylase catalyzes the carboxylation of biotin on its carrier protein (BCCP) and then the CO(2) group is transferred by the carboxyltransferase to acetyl-CoA to form malonyl-CoA. In Geobacillus sp. (strain WCH70), this protein is Acetyl-coenzyme A carboxylase carboxyl transferase subunit alpha.